The chain runs to 87 residues: Keratin-associated protein 19-3 (87 aa).

The segment at 9-82 is 23 X 2 AA repeats of G-[YCGS]; sequence GGLGYGYGSF…RRPSCCGGYG (74 aa).

The protein belongs to the KRTAP type 19 family. Interacts with hair keratins. Strong expression in narrowly defined pattern restricted to the lower and middle cortical regions of the hair shaft in both developing and cycling hair. During hair follicle regression (catagen), expression levels decrease until expression is no longer detectable in follicles at resting stage (telogen).

Functionally, in the hair cortex, hair keratin intermediate filaments are embedded in an interfilamentous matrix, consisting of hair keratin-associated proteins (KRTAP), which are essential for the formation of a rigid and resistant hair shaft through their extensive disulfide bond cross-linking with abundant cysteine residues of hair keratins. The matrix proteins include the high-sulfur and high-glycine-tyrosine keratins. The sequence is that of Keratin-associated protein 19-3 (Krtap19-3) from Mus musculus (Mouse).